Consider the following 77-residue polypeptide: U8-lycotoxin-Ls1a (77 aa).

An N-terminal signal peptide occupies residues 1–20 (MKLIIFTGLVLFAIVSLIEA). Positions 21-26 (QAENEK) are excised as a propeptide.

Belongs to the neurotoxin 19 (CSTX) family. 08 (U8-Lctx) subfamily. Post-translationally, contains 4 disulfide bonds. As to expression, expressed by the venom gland.

It localises to the secreted. This Lycosa singoriensis (Wolf spider) protein is U8-lycotoxin-Ls1a.